We begin with the raw amino-acid sequence, 123 residues long: CD59 glycoprotein (123 aa).

Positions 1–25 (MGSKGGFILLWLLSILAVLCHLGHS) are cleaved as a signal peptide. One can recognise a UPAR/Ly6 domain in the interval 26–103 (LQCYNCINPA…LCNKSDATIS (78 aa)). 5 disulfides stabilise this stretch: Cys-28/Cys-51, Cys-31/Cys-38, Cys-44/Cys-65, Cys-71/Cys-89, and Cys-90/Cys-95. Asn-43 is a glycosylation site (N-linked (GlcNAc...) asparagine). The GPI-anchor amidated serine moiety is linked to residue Ser-98. Positions 99-123 (DATISSGKTALLVILLLVATWHFCL) are cleaved as a propeptide — removed in mature form.

As to quaternary structure, interacts with T-cell surface antigen CD2. N- and O-glycosylated. In terms of tissue distribution, expressed in all tissues tested (lung, testis liver, kidney, spleen, heart and skeletal muscle). Highest levels in lung and spleen, lowest levels in liver and skeletal muscle.

The protein localises to the cell membrane. It is found in the secreted. In terms of biological role, potent inhibitor of the complement membrane attack complex (MAC) action, which protects self-cells from damage during complement activation. Acts by binding to the beta-haipins of C8 (C8A and C8B) components of the assembling MAC, forming an intermolecular beta-sheet that prevents incorporation of the multiple copies of C9 required for complete formation of the osmolytic pore. This is CD59 glycoprotein from Sus scrofa (Pig).